A 521-amino-acid polypeptide reads, in one-letter code: Bifunctional purine biosynthesis protein PurH (521 aa).

Residues 1–145 (MIKQALISVS…KNHRDVTVVV (145 aa)) enclose the MGS-like domain.

It belongs to the PurH family.

The enzyme catalyses (6R)-10-formyltetrahydrofolate + 5-amino-1-(5-phospho-beta-D-ribosyl)imidazole-4-carboxamide = 5-formamido-1-(5-phospho-D-ribosyl)imidazole-4-carboxamide + (6S)-5,6,7,8-tetrahydrofolate. It carries out the reaction IMP + H2O = 5-formamido-1-(5-phospho-D-ribosyl)imidazole-4-carboxamide. The protein operates within purine metabolism; IMP biosynthesis via de novo pathway; 5-formamido-1-(5-phospho-D-ribosyl)imidazole-4-carboxamide from 5-amino-1-(5-phospho-D-ribosyl)imidazole-4-carboxamide (10-formyl THF route): step 1/1. Its pathway is purine metabolism; IMP biosynthesis via de novo pathway; IMP from 5-formamido-1-(5-phospho-D-ribosyl)imidazole-4-carboxamide: step 1/1. This is Bifunctional purine biosynthesis protein PurH from Burkholderia pseudomallei (strain 1106a).